Consider the following 402-residue polypeptide: Propionate kinase (402 aa).

2 residues coordinate ATP: Asn-11 and Lys-18. Asn-11 provides a ligand contact to Mg(2+). Arg-86 serves as a coordination point for substrate. Asp-143 (proton donor/acceptor) is an active-site residue. Residues His-175, 203–207 (HLGNG), 278–280 (DLR), and 326–330 (GIGEN) contribute to the ATP site.

Belongs to the acetokinase family. TdcD subfamily. In terms of assembly, homodimer. It depends on Mg(2+) as a cofactor.

It carries out the reaction propanoate + ATP = propanoyl phosphate + ADP. Its pathway is amino-acid degradation; L-threonine degradation via propanoate pathway; propanoate from L-threonine: step 4/4. Catalyzes the conversion of propionyl phosphate and ADP to propionate and ATP. This is Propionate kinase from Escherichia coli O157:H7.